We begin with the raw amino-acid sequence, 231 residues long: Large ribosomal subunit protein uL1 (231 aa).

Belongs to the universal ribosomal protein uL1 family. In terms of assembly, part of the 50S ribosomal subunit.

Its function is as follows. Binds directly to 23S rRNA. The L1 stalk is quite mobile in the ribosome, and is involved in E site tRNA release. Protein L1 is also a translational repressor protein, it controls the translation of the L11 operon by binding to its mRNA. This chain is Large ribosomal subunit protein uL1, found in Nitrosomonas eutropha (strain DSM 101675 / C91 / Nm57).